The chain runs to 238 residues: Large ribosomal subunit protein uL1 (238 aa).

The protein belongs to the universal ribosomal protein uL1 family. In terms of assembly, part of the 50S ribosomal subunit.

Functionally, binds directly to 23S rRNA. The L1 stalk is quite mobile in the ribosome, and is involved in E site tRNA release. In terms of biological role, protein L1 is also a translational repressor protein, it controls the translation of the L11 operon by binding to its mRNA. This chain is Large ribosomal subunit protein uL1, found in Salinispora arenicola (strain CNS-205).